We begin with the raw amino-acid sequence, 275 residues long: Acetyl-coenzyme A carboxylase carboxyl transferase subunit beta (275 aa).

A CoA carboxyltransferase N-terminal domain is found at 18–275 (KDNAGPAVPS…IHRLGGEMHA (258 aa)). Residues 23 to 47 (PAVPSNTHSSKSNGNPVSEMKENKR) are disordered. The segment covering 26 to 38 (PSNTHSSKSNGNP) has biased composition (polar residues).

It belongs to the AccD/PCCB family. Acetyl-CoA carboxylase is a heterohexamer composed of biotin carboxyl carrier protein (AccB), biotin carboxylase (AccC) and two subunits each of ACCase subunit alpha (AccA) and ACCase subunit beta (AccD).

The protein resides in the cytoplasm. The enzyme catalyses N(6)-carboxybiotinyl-L-lysyl-[protein] + acetyl-CoA = N(6)-biotinyl-L-lysyl-[protein] + malonyl-CoA. The protein operates within lipid metabolism; malonyl-CoA biosynthesis; malonyl-CoA from acetyl-CoA: step 1/1. Component of the acetyl coenzyme A carboxylase (ACC) complex. Biotin carboxylase (BC) catalyzes the carboxylation of biotin on its carrier protein (BCCP) and then the CO(2) group is transferred by the transcarboxylase to acetyl-CoA to form malonyl-CoA. The sequence is that of Acetyl-coenzyme A carboxylase carboxyl transferase subunit beta from Alkaliphilus oremlandii (strain OhILAs) (Clostridium oremlandii (strain OhILAs)).